Here is a 169-residue protein sequence, read N- to C-terminus: Small ribosomal subunit protein uS5c (169 aa).

The S5 DRBM domain maps to 17 to 80; the sequence is WQERVVQIRR…ADGKKHVVEV (64 aa).

Belongs to the universal ribosomal protein uS5 family. In terms of assembly, part of the 30S ribosomal subunit. Contacts protein S4.

The protein resides in the plastid. Its subcellular location is the cyanelle. With S4 and S12 plays an important role in translational accuracy. This is Small ribosomal subunit protein uS5c (rps5) from Cyanophora paradoxa.